The primary structure comprises 610 residues: Zinc metalloproteinase-disintegrin-like 3a (610 aa).

The signal sequence occupies residues 1-19; that stretch reads MIQVLLVTILAVFPYQGSS. Positions 20–188 are excised as a propeptide; the sequence is IILGSGNVND…KKASQLVVTA (169 aa). The Peptidase M12B domain occupies 198-394; it reads RYVELVIVAD…YTPKCILNEP (197 aa). Glu201 is a Ca(2+) binding site. Asn217 carries an N-linked (GlcNAc...) asparagine glycan. Asp285 serves as a coordination point for Ca(2+). Cystine bridges form between Cys309–Cys389, Cys349–Cys373, and Cys351–Cys356. Residue His334 participates in Zn(2+) binding. Residue Glu335 is part of the active site. Zn(2+)-binding residues include His338 and His344. Residues Cys389, Asn392, Val404, Asn407, Glu411, Glu414, and Asp417 each contribute to the Ca(2+) site. Residues 402-488 form the Disintegrin domain; sequence PPVCGNELLE…DCPTDDFHKN (87 aa). Intrachain disulfides connect Cys405–Cys434, Cys416–Cys429, Cys418–Cys424, Cys428–Cys451, Cys442–Cys448, Cys447–Cys473, Cys460–Cys480, Cys467–Cys499, Cys492–Cys504, Cys511–Cys561, Cys526–Cys572, Cys539–Cys549, Cys556–Cys598, and Cys592–Cys603. The short motif at 466 to 468 is the D/ECD-tripeptide element; it reads ECD.

It belongs to the venom metalloproteinase (M12B) family. P-III subfamily. Requires Zn(2+) as cofactor. As to expression, expressed by the venom gland.

The protein resides in the secreted. Its function is as follows. Snake venom metalloproteinase that impairs hemostasis in the envenomed animal. The sequence is that of Zinc metalloproteinase-disintegrin-like 3a from Crotalus adamanteus (Eastern diamondback rattlesnake).